The chain runs to 190 residues: Protein GrpE (190 aa).

The span at 1–10 shows a compositional bias: basic and acidic residues; sequence MKKHVTEEQK. Residues 1 to 42 form a disordered region; that stretch reads MKKHVTEEQKTSAAPEAEQASPESSAAEAATPEERISRLEEQ. The span at 12–30 shows a compositional bias: low complexity; that stretch reads SAAPEAEQASPESSAAEAA. Basic and acidic residues predominate over residues 32–42; that stretch reads PEERISRLEEQ.

It belongs to the GrpE family. In terms of assembly, homodimer.

The protein localises to the cytoplasm. In terms of biological role, participates actively in the response to hyperosmotic and heat shock by preventing the aggregation of stress-denatured proteins, in association with DnaK and GrpE. It is the nucleotide exchange factor for DnaK and may function as a thermosensor. Unfolded proteins bind initially to DnaJ; upon interaction with the DnaJ-bound protein, DnaK hydrolyzes its bound ATP, resulting in the formation of a stable complex. GrpE releases ADP from DnaK; ATP binding to DnaK triggers the release of the substrate protein, thus completing the reaction cycle. Several rounds of ATP-dependent interactions between DnaJ, DnaK and GrpE are required for fully efficient folding. This is Protein GrpE from Pelobacter propionicus (strain DSM 2379 / NBRC 103807 / OttBd1).